The chain runs to 241 residues: 2-C-methyl-D-erythritol 4-phosphate cytidylyltransferase (241 aa).

Belongs to the IspD/TarI cytidylyltransferase family. IspD subfamily. As to quaternary structure, homodimer.

The catalysed reaction is 2-C-methyl-D-erythritol 4-phosphate + CTP + H(+) = 4-CDP-2-C-methyl-D-erythritol + diphosphate. Its pathway is isoprenoid biosynthesis; isopentenyl diphosphate biosynthesis via DXP pathway; isopentenyl diphosphate from 1-deoxy-D-xylulose 5-phosphate: step 2/6. Functionally, catalyzes the formation of 4-diphosphocytidyl-2-C-methyl-D-erythritol from CTP and 2-C-methyl-D-erythritol 4-phosphate (MEP). This Yersinia pestis protein is 2-C-methyl-D-erythritol 4-phosphate cytidylyltransferase.